The primary structure comprises 141 residues: Small ribosomal subunit protein uS9c (141 aa).

It belongs to the universal ribosomal protein uS9 family.

The protein resides in the plastid. Its subcellular location is the chloroplast. The polypeptide is Small ribosomal subunit protein uS9c (rps9) (Tupiella akineta (Green alga)).